The sequence spans 1415 residues: Bridge-like lipid transfer protein family member 3B (1415 aa).

Residues 3-94 enclose the Chorein N-terminal domain; the sequence is GLIKKQILKH…DKVIMEMSTC (92 aa). Disordered regions lie at residues 267–300 and 882–904; these read STEQRKSMASETTQSPTPPVSSQQVKNPQTSTTP and KSPLPCEGSPVTDHKLPSPSEGV. The segment covering 275 to 300 has biased composition (polar residues); the sequence is ASETTQSPTPPVSSQQVKNPQTSTTP. A coiled-coil region spans residues 1367–1404; sequence KAAGISKEQLVEENECLKQELAKTKMALAESHMERDRL.

It localises to the cytoplasm. Its subcellular location is the cytosol. The protein localises to the early endosome. Its function is as follows. Tube-forming lipid transport protein which mediates the transfer of lipids between membranes at organelle contact sites. Required for retrograde traffic of vesicle clusters in the early endocytic pathway to the Golgi complex. This chain is Bridge-like lipid transfer protein family member 3B (bltp3b), found in Xenopus laevis (African clawed frog).